Reading from the N-terminus, the 360-residue chain is Phospho-N-acetylmuramoyl-pentapeptide-transferase (360 aa).

The next 10 helical transmembrane spans lie at 26–46 (GVLATLTALVLSLFIGPFFIA), 70–90 (GTPTMGGALILLVVILTTLLW), 94–114 (GNPLVWVAVLTTLAFGAIGFV), 136–156 (LQSLVAFAAGGVLYALASNPV), 164–184 (FIPHVLIPMGAGFIVFSYFVI), 199–219 (GLAIVPTVMVAGALGVFAYVS), 236–256 (SGQMLIFCGALVGAGLGFLWF), 263–283 (VFMGDTGALALGAALAIVAIV), 289–309 (VLFIMGGVFVVETLSVIIQVV), and 339–359 (AVRFWIITVILVLVGLSSLKI).

The protein belongs to the glycosyltransferase 4 family. MraY subfamily. Requires Mg(2+) as cofactor.

It localises to the cell inner membrane. The catalysed reaction is UDP-N-acetyl-alpha-D-muramoyl-L-alanyl-gamma-D-glutamyl-meso-2,6-diaminopimeloyl-D-alanyl-D-alanine + di-trans,octa-cis-undecaprenyl phosphate = di-trans,octa-cis-undecaprenyl diphospho-N-acetyl-alpha-D-muramoyl-L-alanyl-D-glutamyl-meso-2,6-diaminopimeloyl-D-alanyl-D-alanine + UMP. It functions in the pathway cell wall biogenesis; peptidoglycan biosynthesis. Its function is as follows. Catalyzes the initial step of the lipid cycle reactions in the biosynthesis of the cell wall peptidoglycan: transfers peptidoglycan precursor phospho-MurNAc-pentapeptide from UDP-MurNAc-pentapeptide onto the lipid carrier undecaprenyl phosphate, yielding undecaprenyl-pyrophosphoryl-MurNAc-pentapeptide, known as lipid I. This Acidithiobacillus ferrooxidans (strain ATCC 23270 / DSM 14882 / CIP 104768 / NCIMB 8455) (Ferrobacillus ferrooxidans (strain ATCC 23270)) protein is Phospho-N-acetylmuramoyl-pentapeptide-transferase.